A 439-amino-acid polypeptide reads, in one-letter code: Taxadien-5-alpha-ol O-acetyltransferase (439 aa).

Active-site proton acceptor residues include H164 and D373.

This sequence belongs to the plant acyltransferase family.

It catalyses the reaction taxa-4(20),11-dien-5alpha-ol + acetyl-CoA = taxa-4(20),11-dien-5alpha-yl acetate + CoA. It functions in the pathway alkaloid biosynthesis; taxol biosynthesis; 10-deacetyl-2-debenzoylbaccatin III from taxa-4(20),11-dien-5alpha-ol: step 1/3. The protein is Taxadien-5-alpha-ol O-acetyltransferase (TAT) of Taxus cuspidata (Japanese yew).